A 507-amino-acid polypeptide reads, in one-letter code: Glycosyltransferase family 92 protein C33H5.2 (507 aa).

A helical transmembrane segment spans residues 6–26 (VILVFCASFALFFTFIIFGRY). In terms of domain architecture, GT92 spans 155-444 (RDVVMCIAPL…LKCYNEKFYD (290 aa)).

Belongs to the glycosyltransferase 92 family.

It is found in the membrane. This Caenorhabditis elegans protein is Glycosyltransferase family 92 protein C33H5.2.